The following is a 79-amino-acid chain: MKVFFILIIFSFTLATCQGECYGSVPLPIDGEDVPLRTCVDTHDGQKHLIVSTWKTANSFSCECTQIGLQCCQKYVAVA.

The N-terminal stretch at 1-19 (MKVFFILIIFSFTLATCQG) is a signal peptide. 3 disulfide bridges follow: Cys-21-Cys-72, Cys-39-Cys-64, and Cys-62-Cys-71.

It is found in the secreted. Shows an slight inhibitory effect toward the metalloproteinase brevilysin H6, but does not inhibit the metalloproteinases thermolysin, HR1A and HR1B. In Protobothrops flavoviridis (Habu), this protein is Small serum protein 3.